A 374-amino-acid chain; its full sequence is Guanine nucleotide-binding protein subunit alpha-15 (374 aa).

The 334-residue stretch at 41-374 (EELKLLLLGP…ARYLDEINLL (334 aa)) folds into the G-alpha domain. The segment at 44-57 (KLLLLGPGESGKST) is G1 motif. Residues 49–56 (GPGESGKS), 183–189 (LRSRMPT), 208–212 (DVGGQ), 277–280 (NKTD), and Ala-346 contribute to the GTP site. Mg(2+) contacts are provided by Ser-56 and Thr-189. Residues 181–189 (DVLRSRMPT) are G2 motif. Residues 204 to 213 (LRIVDVGGQR) are G3 motif. Residues 273–280 (ILFLNKTD) form a G4 motif region. The G5 motif stretch occupies residues 344 to 349 (TCATDT).

The protein belongs to the G-alpha family. G(q) subfamily. In terms of assembly, g proteins are composed of 3 units; alpha, beta and gamma. The alpha chain contains the guanine nucleotide binding site. Expressed primarily in hematopoietic cells. Coexpressed with EDG6 at the same relative levels in all tissues examined, with the highest levels in adult spleen and lung.

In terms of biological role, guanine nucleotide-binding proteins (G proteins) are involved as modulators or transducers in various transmembrane signaling systems. This is Guanine nucleotide-binding protein subunit alpha-15 (Gna15) from Mus musculus (Mouse).